The sequence spans 401 residues: 1-deoxy-D-xylulose 5-phosphate reductoisomerase (401 aa).

NADPH contacts are provided by Thr10, Gly11, Ser12, Ile13, Gly36, Arg37, Asn38, and Asn124. Lys125 lines the 1-deoxy-D-xylulose 5-phosphate pocket. Residue Glu126 participates in NADPH binding. Asp150 is a Mn(2+) binding site. 1-deoxy-D-xylulose 5-phosphate-binding residues include Ser151, Glu152, Ser176, and His199. Glu152 contributes to the Mn(2+) binding site. Residue Gly205 coordinates NADPH. 1-deoxy-D-xylulose 5-phosphate contacts are provided by Ser212, Asn217, Lys218, and Glu221. A Mn(2+)-binding site is contributed by Glu221.

Belongs to the DXR family. It depends on Mg(2+) as a cofactor. Mn(2+) is required as a cofactor.

The enzyme catalyses 2-C-methyl-D-erythritol 4-phosphate + NADP(+) = 1-deoxy-D-xylulose 5-phosphate + NADPH + H(+). Its pathway is isoprenoid biosynthesis; isopentenyl diphosphate biosynthesis via DXP pathway; isopentenyl diphosphate from 1-deoxy-D-xylulose 5-phosphate: step 1/6. Functionally, catalyzes the NADPH-dependent rearrangement and reduction of 1-deoxy-D-xylulose-5-phosphate (DXP) to 2-C-methyl-D-erythritol 4-phosphate (MEP). In Acaryochloris marina (strain MBIC 11017), this protein is 1-deoxy-D-xylulose 5-phosphate reductoisomerase.